The sequence spans 478 residues: Glutamate--tRNA ligase (478 aa).

The short motif at 9–19 is the 'HIGH' region element; the sequence is PSPTGLLHIGT. The 'KMSKS' region motif lies at 248–252; the sequence is KLSKR. Position 251 (Lys-251) interacts with ATP.

It belongs to the class-I aminoacyl-tRNA synthetase family. Glutamate--tRNA ligase type 1 subfamily. Monomer.

It is found in the cytoplasm. The catalysed reaction is tRNA(Glu) + L-glutamate + ATP = L-glutamyl-tRNA(Glu) + AMP + diphosphate. In terms of biological role, catalyzes the attachment of glutamate to tRNA(Glu) in a two-step reaction: glutamate is first activated by ATP to form Glu-AMP and then transferred to the acceptor end of tRNA(Glu). In Prochlorococcus marinus subsp. pastoris (strain CCMP1986 / NIES-2087 / MED4), this protein is Glutamate--tRNA ligase.